We begin with the raw amino-acid sequence, 386 residues long: L-lactate dehydrogenase (386 aa).

One can recognise an FMN hydroxy acid dehydrogenase domain in the interval 1 to 380; it reads MIISASTDYR…TSDSLVQVTQ (380 aa). Substrate is bound at residue tyrosine 24. The FMN site is built by serine 106 and glutamine 127. Tyrosine 129 lines the substrate pocket. Residue threonine 155 participates in FMN binding. Arginine 164 provides a ligand contact to substrate. Lysine 251 contributes to the FMN binding site. The active-site Proton acceptor is the histidine 275. Arginine 278 contacts substrate. Position 306 to 330 (306 to 330) interacts with FMN; sequence DSGIRSGLDVVRMIALGADGVMLGR.

Belongs to the FMN-dependent alpha-hydroxy acid dehydrogenase family. FMN is required as a cofactor.

Its subcellular location is the cell inner membrane. It carries out the reaction (S)-lactate + A = pyruvate + AH2. Its function is as follows. Catalyzes the conversion of L-lactate to pyruvate. Is coupled to the respiratory chain. This chain is L-lactate dehydrogenase, found in Pectobacterium atrosepticum (strain SCRI 1043 / ATCC BAA-672) (Erwinia carotovora subsp. atroseptica).